The following is a 433-amino-acid chain: Beta-agarase AgaA (433 aa).

Positions 1–20 (MRKITSILLTCVMGCTATYA) are cleaved as a signal peptide. Positions 21–295 (ADWDGVPVPA…WVRFYKPVPI (275 aa)) constitute a GH16 domain. Residue Glu-147 is the Nucleophile of the active site. Residue Glu-152 is the Proton donor of the active site. The CBM6 domain maps to 300 to 431 (TTVELGNFHN…QWNGDEIRFV (132 aa)).

Belongs to the glycosyl hydrolase 16 family. Monomer.

Its subcellular location is the periplasm. The catalysed reaction is Hydrolysis of (1-&gt;4)-beta-D-galactosidic linkages in agarose, giving the tetramer as the predominant product.. Activity is abolished by Hg(2+), Cu(2+), Pb(2+) and Zn(2+) ions, but is not affected by NaCl up to at least 1.0 M, Mg(2+), K(+) and Ca(2+). Not affected by iodoacetamide, p-chloromercuribenzoate, dithiothreitol, 2-mercaptoethanol, EDTA and sodium dodecyl sulfate. Inhibited by N-bromosuccinimide. Functionally, endo-type beta-agarase, which produces neoagarotetraose (NA4) as the main final product, with a small amount of neoagarohexaose (NA6) and neoagarobiose (NA2). The sequence is that of Beta-agarase AgaA from Microbulbifer thermotolerans.